Reading from the N-terminus, the 398-residue chain is T-box transcription factor TBX1 (398 aa).

Positions 23–72 (AAGGFPGAASPGADPYGPREPPPPPPRYDPCAAAAPGAPGPPPPPHAYPF) are disordered. Residues 29–38 (GAASPGADPY) are compositionally biased toward low complexity. Pro residues-rich tracts occupy residues 40-50 (PREPPPPPPRY) and 60-69 (APGPPPPPHA). Positions 119–297 (LWDEFNQLGT…SNPFAKGFRD (179 aa)) form a DNA-binding region, T-box.

As to quaternary structure, binds DNA as a dimer. Interacts with DSCR6. Interacts with NKX2-5.

It is found in the nucleus. Transcription factor that plays a key role in cardiovascular development by promoting pharyngeal arch segmentation during embryonic development. Also involved in craniofacial muscle development. Together with NKX2-5, acts as a regulator of asymmetric cardiac morphogenesis by promoting expression of PITX2. Acts upstream of TBX1 for the formation of the thymus and parathyroid glands from the third pharyngeal pouch. Required for hair follicle stem cell self-renewal. Binds to the palindromic T site 5'-TTCACACCTAGGTGTGAA-3' DNA sequence. This Homo sapiens (Human) protein is T-box transcription factor TBX1.